Consider the following 190-residue polypeptide: T-cell receptor gamma chain C region 5/10-13 (190 aa).

Residues 1–157 (DKRTDSDFSP…LQVTTTYAFY (157 aa)) are c region. A helical membrane pass occupies residues 158-178 (TYLILFFKSMVHLAFVVFCLF). At 179-190 (RRAAMSCDDQRS) the chain is on the cytoplasmic side.

Its subcellular location is the membrane. This is T-cell receptor gamma chain C region 5/10-13 from Mus musculus (Mouse).